The sequence spans 296 residues: Ribonuclease HIII (296 aa).

One can recognise an RNase H type-2 domain in the interval 80–296 (LALIGSDEVG…NTKKAYQRLK (217 aa)). Asp86, Glu87, and Asp191 together coordinate a divalent metal cation.

This sequence belongs to the RNase HII family. RnhC subfamily. The cofactor is Mn(2+). Mg(2+) serves as cofactor.

Its subcellular location is the cytoplasm. The enzyme catalyses Endonucleolytic cleavage to 5'-phosphomonoester.. In terms of biological role, endonuclease that specifically degrades the RNA of RNA-DNA hybrids. The polypeptide is Ribonuclease HIII (Streptococcus thermophilus (strain ATCC BAA-491 / LMD-9)).